We begin with the raw amino-acid sequence, 65 residues long: Large ribosomal subunit protein uL29 (65 aa).

The protein belongs to the universal ribosomal protein uL29 family.

The sequence is that of Large ribosomal subunit protein uL29 from Acinetobacter baumannii (strain AB307-0294).